The chain runs to 1238 residues: Receptor-type tyrosine-protein phosphatase eta (1238 aa).

The signal sequence occupies residues 1–28 (MKPAARETRTPPRSPGLRWALLPLLLLL). Residues 29–876 (RQGQVLCAGA…LPQDPGVICG (848 aa)) lie on the Extracellular side of the membrane. Positions 39–122 (APNPIFDIEA…LNKTITTEPW (84 aa)) constitute a Fibronectin type-III 1 domain. N-linked (GlcNAc...) asparagine glycans are attached at residues asparagine 62, asparagine 78, asparagine 85, asparagine 90, asparagine 110, asparagine 114, asparagine 145, asparagine 164, asparagine 173, asparagine 182, asparagine 198, asparagine 207, asparagine 244, asparagine 253, asparagine 267, asparagine 278, asparagine 313, asparagine 317, asparagine 333, asparagine 366, asparagine 379, asparagine 398, asparagine 403, asparagine 437, asparagine 452, asparagine 488, asparagine 506, asparagine 538, asparagine 572, asparagine 576, asparagine 662, asparagine 668, asparagine 685, asparagine 691, asparagine 725, asparagine 811, and asparagine 838. In terms of domain architecture, Fibronectin type-III 2 spans 170 to 266 (PGTNNSFAFP…GQPRNKVFKT (97 aa)). 6 consecutive Fibronectin type-III domains span residues 270-358 (QVSD…SPDQ), 359-443 (VSDF…TDPS), 444-527 (AVTD…TQYT), 528-621 (RPSS…TEPE), 622-718 (PVTS…TDPP), and 717-803 (PPTP…SEVL). A helical membrane pass occupies residues 877–897 (AVFGCIFGALAITAVGGFIFW). The Cytoplasmic portion of the chain corresponds to 898 to 1238 (RKKRTDAKNN…MFGKTNGYIA (341 aa)). Position 910 is a phosphoserine (serine 910). A Tyrosine-protein phosphatase domain is found at 942 to 1199 (FAEEYEDLKL…VFLNQCVLDI (258 aa)). Substrate contacts are provided by residues aspartate 1106, 1140–1146 (CSAGVGR), and glutamine 1184. Cysteine 1140 (phosphocysteine intermediate) is an active-site residue.

Belongs to the protein-tyrosine phosphatase family. Receptor class 3 subfamily. Monomer. Interacts with CTNNB1 (phosphorylated) and JUP (phosphorylated). Interacts with FLT3 (phosphorylated). Interacts with GAB1 and GRB2. In terms of tissue distribution, expressed at high levels in brain, kidney, spleen and intestine, and at lower levels in liver, lung, thymus and heart. Expressed at a high level in the myeloid cell line FDC-P2, and at a lower level in the pre-B lymphoid cell line WEHI-231 and the T hybridoma cell line HB21.7.31. Not expressed in the fibroblast cell line NIH3T3 or the erythroid cell line F5-5. Expressed in macrophages.

The protein localises to the cell membrane. The protein resides in the cell projection. It localises to the ruffle membrane. Its subcellular location is the cell junction. It carries out the reaction O-phospho-L-tyrosyl-[protein] + H2O = L-tyrosyl-[protein] + phosphate. Tyrosine phosphatase which dephosphorylates or contributes to the dephosphorylation of CTNND1, FLT3, PDGFRB, MET, KDR, LYN, SRC, MAPK1, MAPK3, EGFR, TJP1, OCLN, PIK3R1 and PIK3R2. Plays a role in cell adhesion, migration, proliferation and differentiation. Has a role in megakaryocytes and platelet formation. Involved in vascular development. May be involved in the mechanism of contact inhibition of cell growth. Regulator of macrophage adhesion and spreading. Positively affects cell-matrix adhesion. Positive regulator of platelet activation and thrombosis. Negative regulator of cell proliferation. Negative regulator of PDGF-stimulated cell migration; through dephosphorylation of PDGFR. Positive regulator of endothelial cell survival, as well as of VEGF-induced SRC and AKT activation; through KDR dephosphorylation. Negative regulator of EGFR signaling pathway; through EGFR dephosphorylation. Enhances the barrier function of epithelial junctions during reassembly. Negatively regulates T-cell receptor (TCR) signaling. Upon T-cell TCR activation, it is up-regulated and excluded from the immunological synapses, while upon T-cell-antigen presenting cells (APC) disengagement, it is no longer excluded and can dephosphorylate PLCG1 and LAT to down-regulate prolongation of signaling. The polypeptide is Receptor-type tyrosine-protein phosphatase eta (Ptprj) (Mus musculus (Mouse)).